The following is a 309-amino-acid chain: Neuropeptide-like 1 (309 aa).

A signal peptide spans 1–28 (MQAVLQSAHSSRRLMLLLSMLLNAAIQP). Positions 29–99 (RSIIVSATDD…GEYPDYLEED (71 aa)) are excised as a propeptide. The tract at residues 126–147 (GQLPTAEPGEDYGDADSGEPSE) is disordered. The span at 133 to 144 (PGEDYGDADSGE) shows a compositional bias: acidic residues. Position 164 is a tyrosine amide (Tyr164). Asn182 is subject to Asparagine amide.

As to expression, MTYamide peptide: Expressed in the larval CNS (at protein level). NAP peptide: Expressed in the larval CNS (at protein level). IPNamide peptide: Expressed in the ventral ganglion of the third larval instar and adult brain (at protein level).

It is found in the secreted. Functionally, acts as a ligand for the receptor-type guanylate cyclase Gyc76C. Stimulates Gyc76c-dependent cGMP production and modulates the IMD innate immune pathway in response to salt stress by inducing nuclear translocation of NF-kappa-B protein Rel which leads to increased expression of the antimicrobial peptide diptericin. Does not appear to play a role in Gyc76C-mediated wing development. This Drosophila melanogaster (Fruit fly) protein is Neuropeptide-like 1 (Nplp1).